A 189-amino-acid polypeptide reads, in one-letter code: dTTP/UTP pyrophosphatase (189 aa).

Catalysis depends on aspartate 70, which acts as the Proton acceptor.

This sequence belongs to the Maf family. YhdE subfamily. It depends on a divalent metal cation as a cofactor.

Its subcellular location is the cytoplasm. It catalyses the reaction dTTP + H2O = dTMP + diphosphate + H(+). It carries out the reaction UTP + H2O = UMP + diphosphate + H(+). Functionally, nucleoside triphosphate pyrophosphatase that hydrolyzes dTTP and UTP. May have a dual role in cell division arrest and in preventing the incorporation of modified nucleotides into cellular nucleic acids. The protein is dTTP/UTP pyrophosphatase of Akkermansia muciniphila (strain ATCC BAA-835 / DSM 22959 / JCM 33894 / BCRC 81048 / CCUG 64013 / CIP 107961 / Muc).